We begin with the raw amino-acid sequence, 394 residues long: Flap endonuclease 1-A (394 aa).

The interval 1 to 105 (MGIKGLTKLI…RELAKRFARR (105 aa)) is N-domain. Aspartate 34 provides a ligand contact to Mg(2+). Residue arginine 71 coordinates DNA. Mg(2+)-binding residues include aspartate 87, glutamate 159, glutamate 161, aspartate 180, and aspartate 182. Positions 123–254 (DVEKYSKKTV…QTALKMIRQH (132 aa)) are I-domain. Glutamate 159 contacts DNA. Glycine 232 and aspartate 234 together coordinate DNA. A Mg(2+)-binding site is contributed by aspartate 234. The interval 338–346 (SQGRLESFF) is interaction with PCNA. The segment at 343–394 (ESFFGVSSSSSNKRKEAPDSEASAGKQVKTAAAVKPAKAASKKGPAKGGKKK) is disordered. The span at 368–381 (KQVKTAAAVKPAKA) shows a compositional bias: low complexity. Basic residues predominate over residues 382 to 394 (ASKKGPAKGGKKK).

It belongs to the XPG/RAD2 endonuclease family. FEN1 subfamily. Interacts with PCNA. Three molecules of FEN1 bind to one PCNA trimer with each molecule binding to one PCNA monomer. PCNA stimulates the nuclease activity without altering cleavage specificity. It depends on Mg(2+) as a cofactor. Post-translationally, phosphorylated. Phosphorylation upon DNA damage induces relocalization to the nuclear plasma.

It is found in the nucleus. The protein localises to the nucleolus. The protein resides in the nucleoplasm. It localises to the mitochondrion. Functionally, structure-specific nuclease with 5'-flap endonuclease and 5'-3' exonuclease activities involved in DNA replication and repair. During DNA replication, cleaves the 5'-overhanging flap structure that is generated by displacement synthesis when DNA polymerase encounters the 5'-end of a downstream Okazaki fragment. It enters the flap from the 5'-end and then tracks to cleave the flap base, leaving a nick for ligation. Also involved in the long patch base excision repair (LP-BER) pathway, by cleaving within the apurinic/apyrimidinic (AP) site-terminated flap. Acts as a genome stabilization factor that prevents flaps from equilibrating into structures that lead to duplications and deletions. Also possesses 5'-3' exonuclease activity on nicked or gapped double-stranded DNA, and exhibits RNase H activity. Also involved in replication and repair of rDNA and in repairing mitochondrial DNA. The sequence is that of Flap endonuclease 1-A from Physcomitrium patens (Spreading-leaved earth moss).